The chain runs to 478 residues: Cytochrome c-552 (478 aa).

The N-terminal stretch at 1-26 is a signal peptide; sequence MARKTLRARRFFSLIFPFFFITSVYA. Residue H94 participates in heme c binding. C122, C125, and K126 together coordinate heme. C160, C163, H164, C209, C212, and H213 together coordinate heme c. Ca(2+) is bound by residues E215, Y216, K261, and Q263. Y216 is a binding site for substrate. H264 contributes to the substrate binding site. The heme c site is built by H275, C282, C285, H286, H301, C314, C317, H318, and H393.

The protein belongs to the cytochrome c-552 family. The cofactor is Ca(2+). Heme c serves as cofactor.

It is found in the periplasm. It carries out the reaction 6 Fe(III)-[cytochrome c] + NH4(+) + 2 H2O = 6 Fe(II)-[cytochrome c] + nitrite + 8 H(+). The protein operates within nitrogen metabolism; nitrate reduction (assimilation). Catalyzes the reduction of nitrite to ammonia, consuming six electrons in the process. The sequence is that of Cytochrome c-552 from Salmonella paratyphi C (strain RKS4594).